A 434-amino-acid polypeptide reads, in one-letter code: D-amino acid dehydrogenase (434 aa).

Valine 3–tryptophan 17 is an FAD binding site.

It belongs to the DadA oxidoreductase family. Requires FAD as cofactor.

The enzyme catalyses a D-alpha-amino acid + A + H2O = a 2-oxocarboxylate + AH2 + NH4(+). The protein operates within amino-acid degradation; D-alanine degradation; NH(3) and pyruvate from D-alanine: step 1/1. In terms of biological role, oxidative deamination of D-amino acids. The sequence is that of D-amino acid dehydrogenase from Yersinia pseudotuberculosis serotype O:3 (strain YPIII).